The sequence spans 197 residues: Translation machinery-associated protein 22 (197 aa).

The SUI1 domain occupies 102–173; the sequence is VQIKRVERNK…DVKEWLLEVY (72 aa).

This sequence belongs to the DENR family. Interacts with the 40S ribosomal subunit.

The protein resides in the cytoplasm. This chain is Translation machinery-associated protein 22 (tma22), found in Aspergillus niger (strain ATCC MYA-4892 / CBS 513.88 / FGSC A1513).